A 145-amino-acid polypeptide reads, in one-letter code: 3-dehydroquinate dehydratase 2 (145 aa).

The active-site Proton acceptor is Y22. Substrate contacts are provided by N73, H79, and D86. H101 functions as the Proton donor in the catalytic mechanism. Residues 102–103 and R112 each bind substrate; that span reads IS.

The protein belongs to the type-II 3-dehydroquinase family. As to quaternary structure, homododecamer.

The enzyme catalyses 3-dehydroquinate = 3-dehydroshikimate + H2O. It functions in the pathway metabolic intermediate biosynthesis; chorismate biosynthesis; chorismate from D-erythrose 4-phosphate and phosphoenolpyruvate: step 3/7. Its function is as follows. Catalyzes a trans-dehydration via an enolate intermediate. The chain is 3-dehydroquinate dehydratase 2 (aroQ2) from Corynebacterium efficiens (strain DSM 44549 / YS-314 / AJ 12310 / JCM 11189 / NBRC 100395).